The following is a 446-amino-acid chain: Tubulin beta chain (446 aa).

Positions 11, 69, 138, 142, 143, 144, 204, and 226 each coordinate GTP. Mg(2+) is bound at residue E69. Residues 423–446 form a disordered region; that stretch reads QQYQDAGVDEEEEEYEEEPLPEDE. Residues 429-446 are compositionally biased toward acidic residues; that stretch reads GVDEEEEEYEEEPLPEDE.

Belongs to the tubulin family. As to quaternary structure, dimer of alpha and beta chains. A typical microtubule is a hollow water-filled tube with an outer diameter of 25 nm and an inner diameter of 15 nM. Alpha-beta heterodimers associate head-to-tail to form protofilaments running lengthwise along the microtubule wall with the beta-tubulin subunit facing the microtubule plus end conferring a structural polarity. Microtubules usually have 13 protofilaments but different protofilament numbers can be found in some organisms and specialized cells. The cofactor is Mg(2+).

The protein localises to the cytoplasm. It is found in the cytoskeleton. Functionally, tubulin is the major constituent of microtubules, a cylinder consisting of laterally associated linear protofilaments composed of alpha- and beta-tubulin heterodimers. Microtubules grow by the addition of GTP-tubulin dimers to the microtubule end, where a stabilizing cap forms. Below the cap, tubulin dimers are in GDP-bound state, owing to GTPase activity of alpha-tubulin. This Pestalotiopsis microspora protein is Tubulin beta chain (TUBB).